The chain runs to 289 residues: tRNA(Ile)-lysidine synthase (289 aa).

11 to 16 (SGGPDS) contributes to the ATP binding site.

It belongs to the tRNA(Ile)-lysidine synthase family.

The protein resides in the cytoplasm. The catalysed reaction is cytidine(34) in tRNA(Ile2) + L-lysine + ATP = lysidine(34) in tRNA(Ile2) + AMP + diphosphate + H(+). Ligates lysine onto the cytidine present at position 34 of the AUA codon-specific tRNA(Ile) that contains the anticodon CAU, in an ATP-dependent manner. Cytidine is converted to lysidine, thus changing the amino acid specificity of the tRNA from methionine to isoleucine. In Mycoplasma pneumoniae (strain ATCC 29342 / M129 / Subtype 1) (Mycoplasmoides pneumoniae), this protein is tRNA(Ile)-lysidine synthase.